A 122-amino-acid chain; its full sequence is Probable glycine cleavage system H protein (122 aa).

A Lipoyl-binding domain is found at 23–104 (IATVGITDYA…PYGNWLVKMK (82 aa)). Lysine 64 carries the N6-lipoyllysine modification.

The protein belongs to the GcvH family. As to quaternary structure, the glycine cleavage system is composed of four proteins: P, T, L and H. (R)-lipoate serves as cofactor.

The glycine cleavage system catalyzes the degradation of glycine. The H protein shuttles the methylamine group of glycine from the P protein to the T protein. The polypeptide is Probable glycine cleavage system H protein (Thermoplasma volcanium (strain ATCC 51530 / DSM 4299 / JCM 9571 / NBRC 15438 / GSS1)).